We begin with the raw amino-acid sequence, 465 residues long: FAD-dependent monooxygenase olcE (465 aa).

Residues 9–29 (IIIGGSVAGLTLALSLNKIGI) form a helical membrane-spanning segment. 5 residues coordinate FAD: Glu-35, Gly-49, Arg-108, Asp-308, and Ala-321.

Belongs to the paxM FAD-dependent monooxygenase family. The cofactor is FAD.

Its subcellular location is the membrane. Its pathway is secondary metabolite biosynthesis; terpenoid biosynthesis. Its function is as follows. FAD-dependent monooxygenase; part of the gene cluster that mediates the biosynthesis of 15-deoxyoxalicine B. The first step of the pathway is the synthesis of nicotinyl-CoA from nicotinic acid by the nicotinic acid-CoA ligase olcI. Nicotinyl-CoA is then a substrate of polyketide synthase olcA to produce 4-hydroxy-6-(3-pyridinyl)-2H-pyran-2-one (HPPO) which is further prenylated by the polyprenyl transferase olcH to yield geranylgeranyl-HPPO. Geranylgeranyl pyrophosphate is provided by the cluster-specific geranylgeranyl pyrophosphate synthase olcC. The FAD-dependent monooxygenase olcE catalyzes the epoxidation of geranylgeranyl-HPPO and the terpene cyclase olcD catalyzes the cyclization of the terpenoid component, resulting in the formation of the tricyclic terpene moiety seen in predecaturin E. The cytochrome P450 monooxygenase then catalyzes the allylic oxidation of predecaturin E, which is followed by spirocylization with concomitant loss of one molecule of water to form decaturin E. Decaturin E is the substrate of the cytochrome P450 monooxygenase olcJ which hydroxylates it at the C-29 position to form decaturin F. The short-chain dehydrogenase/reductase olcF may catalyze the oxidation of decaturin F to generate the 29-hydroxyl-27-one intermediate, and subsequent hemiacetal formation probably leads to the formation of decaturin C. The dioxygenase olcK may be a peroxisomal enzyme that catalyzes the hydroxylation of decaturin C into decaturin A once decaturin C is shuttled into the peroxisome by the MFS transporter olcL. Finally the cytochrome P450 monooxygenase olcB catalyzes the oxidative rearrangement to yield 15-deoxyoxalicine B. In the absence of olcJ, decaturin E may be shunted to a pathway in which it is oxidized to a ketone, possibly by olcF, to form decaturin D, which undergoes further allylic oxidation to yield decaturin G. Moreover, in the absence of oclK or oclL, oclB can convert decaturin C into 15-deoxyoxalicine A. The polypeptide is FAD-dependent monooxygenase olcE (Penicillium canescens).